A 335-amino-acid chain; its full sequence is UPF0353 protein Mflv_3659 (335 aa).

Helical transmembrane passes span 18 to 38 and 67 to 87; these read WFFL…VVQL and LPAV…AGPT. In terms of domain architecture, VWFA spans 98-294; sequence VVMLVIDVSQ…EQLKQVFTNL (197 aa). The chain crosses the membrane as a helical span at residues 309–329; sequence VGWLRLGAGVLALAALGALLI.

Belongs to the UPF0353 family.

It is found in the cell membrane. This chain is UPF0353 protein Mflv_3659, found in Mycolicibacterium gilvum (strain PYR-GCK) (Mycobacterium gilvum (strain PYR-GCK)).